The sequence spans 74 residues: Large ribosomal subunit protein bL31 (74 aa).

Zn(2+) is bound by residues cysteine 16, cysteine 18, cysteine 37, and cysteine 40.

This sequence belongs to the bacterial ribosomal protein bL31 family. Type A subfamily. In terms of assembly, part of the 50S ribosomal subunit. Zn(2+) is required as a cofactor.

Its function is as follows. Binds the 23S rRNA. The polypeptide is Large ribosomal subunit protein bL31 (Koribacter versatilis (strain Ellin345)).